Reading from the N-terminus, the 334-residue chain is Ferredoxin--NADP reductase (334 aa).

FAD is bound by residues Asp-33, Gln-41, Tyr-46, Ala-86, Phe-120, Asp-286, and Thr-327.

The protein belongs to the ferredoxin--NADP reductase type 2 family. As to quaternary structure, homodimer. The cofactor is FAD.

It catalyses the reaction 2 reduced [2Fe-2S]-[ferredoxin] + NADP(+) + H(+) = 2 oxidized [2Fe-2S]-[ferredoxin] + NADPH. This Rickettsia massiliae (strain Mtu5) protein is Ferredoxin--NADP reductase.